Reading from the N-terminus, the 331-residue chain is Glycerol-3-phosphate dehydrogenase [NAD(P)+] (331 aa).

The NADPH site is built by Trp11, Arg30, and Lys105. Positions 105, 134, and 136 each coordinate sn-glycerol 3-phosphate. Ala138 lines the NADPH pocket. The sn-glycerol 3-phosphate site is built by Lys189, Asp242, Ser252, Arg253, and Asn254. Lys189 serves as the catalytic Proton acceptor. Arg253 is an NADPH binding site. NADPH contacts are provided by Val277 and Glu279.

It belongs to the NAD-dependent glycerol-3-phosphate dehydrogenase family.

It is found in the cytoplasm. The catalysed reaction is sn-glycerol 3-phosphate + NAD(+) = dihydroxyacetone phosphate + NADH + H(+). It carries out the reaction sn-glycerol 3-phosphate + NADP(+) = dihydroxyacetone phosphate + NADPH + H(+). Its pathway is membrane lipid metabolism; glycerophospholipid metabolism. Functionally, catalyzes the reduction of the glycolytic intermediate dihydroxyacetone phosphate (DHAP) to sn-glycerol 3-phosphate (G3P), the key precursor for phospholipid synthesis. The polypeptide is Glycerol-3-phosphate dehydrogenase [NAD(P)+] (Janthinobacterium sp. (strain Marseille) (Minibacterium massiliensis)).